Here is a 442-residue protein sequence, read N- to C-terminus: Glycoprotein endo-alpha-1,2-mannosidase-like protein (442 aa).

At 1–8 (MNRLRRKA) the chain is on the cytoplasmic side. Residues 9–29 (CVALLLFTLFIFGTMMGLRTL) traverse the membrane as a helical; Signal-anchor for type II membrane protein segment. Topologically, residues 30 to 442 (KPTDGFSDLA…FSKEKEQWLM (413 aa)) are lumenal.

It belongs to the glycosyl hydrolase 99 family.

The protein localises to the golgi apparatus membrane. This Danio rerio (Zebrafish) protein is Glycoprotein endo-alpha-1,2-mannosidase-like protein (maneal).